Reading from the N-terminus, the 276-residue chain is Aquaporin-1 (276 aa).

The Cytoplasmic portion of the chain corresponds to 1–10; that stretch reads MLDAEQKKNY. A helical transmembrane segment spans residues 11-31; sequence VAGAFGEFVGTAYFLFMGVGG. Over 32–46 the chain is Extracellular; sequence AVNFLNNAAGSPLPG. Residues 47–67 form a helical membrane-spanning segment; the sequence is FAIPFCFGFSLFVNVFIWAPI. Residues 68–93 are Cytoplasmic-facing; it reads SGGVFNPSITIALMATNPKDFPWYRG. Positions 73–75 match the NPA 1 motif; it reads NPS. The helical transmembrane segment at 94-114 threads the bilayer; the sequence is ILYIVSQFLGALFGSWLIDLI. Residues 115–133 are Extracellular-facing; sequence QPEAPNAATLLADGVSVAQ. The helical transmembrane segment at 134-154 threads the bilayer; the sequence is GLFMEMFATSVLTMAVLILAG. Residues 155-159 lie on the Cytoplasmic side of the membrane; sequence ERYGK. The chain crosses the membrane as a helical span at residues 160 to 180; sequence YLAPFGIGMSLFISALCAGPY. Residues 181–204 lie on the Extracellular side of the membrane; sequence TGASLNPARTLGPAIVANQYGRAH. Residues 186–188 carry the NPA 2 motif; that stretch reads NPA. A helical membrane pass occupies residues 205 to 225; the sequence is WIYYVGPTLGSLLAAGYWHIL. Topologically, residues 226-276 are cytoplasmic; it reads RILNIDVVDLKNVLNKCKKCGKEDPRISLKHCEECLKDDPKPEKYDIESQN.

The protein belongs to the MIP/aquaporin (TC 1.A.8) family.

It localises to the cell membrane. The catalysed reaction is H2O(in) = H2O(out). Its activity is regulated as follows. Polyethylene glycol (PEG) stimulates whereas glycerol inhibits the aquaporin activity. In terms of biological role, water channel required to facilitate the transport of water across membranes. Stimulates plant drought tolerance by facilitating the transport of water from the arbuscular mycorrhiza fungus to host plants. The polypeptide is Aquaporin-1 (Rhizophagus irregularis (Arbuscular mycorrhizal fungus)).